The sequence spans 508 residues: Strychnine-11-hydroxylase (508 aa).

A helical transmembrane segment spans residues 5–25 (MSFLLLFSLCFLIHCFVFLLI). Cysteine 445 provides a ligand contact to heme.

Belongs to the cytochrome P450 family. Requires heme as cofactor.

Its subcellular location is the membrane. It carries out the reaction beta-colubrine + reduced [NADPH--hemoprotein reductase] + O2 = 11-demethylbrucine + oxidized [NADPH--hemoprotein reductase] + H2O + H(+). It functions in the pathway alkaloid biosynthesis. Functionally, monooxygenase involved in the biosynthesis of curare monoterpene indole alkaloids (MIAs), natural products such as strychnine, a neurotoxic compound used as a pesticide to control rodents, and its pharmacologically active derivatives, including brucine, used to regulate blood pressure. Curare alkaloids act as animal glycine receptor antagonists. Catalyzes the conversion of beta-colubrine to 11-deMe brucine. This Strychnos nux-vomica (Poison nut) protein is Strychnine-11-hydroxylase.